A 373-amino-acid polypeptide reads, in one-letter code: Dual-specificity RNA methyltransferase RlmN (373 aa).

Glu94 (proton acceptor) is an active-site residue. The 240-residue stretch at 100-339 (EEDRATLCVS…VIVRKTRGDD (240 aa)) folds into the Radical SAM core domain. Residues Cys107 and Cys344 are joined by a disulfide bond. Positions 114, 118, and 121 each coordinate [4Fe-4S] cluster. S-adenosyl-L-methionine is bound by residues 168–169 (GE), Ser200, 222–224 (SIH), and Asn301. Cys344 serves as the catalytic S-methylcysteine intermediate.

It belongs to the radical SAM superfamily. RlmN family. It depends on [4Fe-4S] cluster as a cofactor.

It is found in the cytoplasm. The catalysed reaction is adenosine(2503) in 23S rRNA + 2 reduced [2Fe-2S]-[ferredoxin] + 2 S-adenosyl-L-methionine = 2-methyladenosine(2503) in 23S rRNA + 5'-deoxyadenosine + L-methionine + 2 oxidized [2Fe-2S]-[ferredoxin] + S-adenosyl-L-homocysteine. It catalyses the reaction adenosine(37) in tRNA + 2 reduced [2Fe-2S]-[ferredoxin] + 2 S-adenosyl-L-methionine = 2-methyladenosine(37) in tRNA + 5'-deoxyadenosine + L-methionine + 2 oxidized [2Fe-2S]-[ferredoxin] + S-adenosyl-L-homocysteine. In terms of biological role, specifically methylates position 2 of adenine 2503 in 23S rRNA and position 2 of adenine 37 in tRNAs. m2A2503 modification seems to play a crucial role in the proofreading step occurring at the peptidyl transferase center and thus would serve to optimize ribosomal fidelity. The sequence is that of Dual-specificity RNA methyltransferase RlmN from Shewanella sediminis (strain HAW-EB3).